A 217-amino-acid chain; its full sequence is Protein-L-isoaspartate O-methyltransferase (217 aa).

The active site involves Ser65.

The protein belongs to the methyltransferase superfamily. L-isoaspartyl/D-aspartyl protein methyltransferase family.

The protein localises to the cytoplasm. It carries out the reaction [protein]-L-isoaspartate + S-adenosyl-L-methionine = [protein]-L-isoaspartate alpha-methyl ester + S-adenosyl-L-homocysteine. Catalyzes the methyl esterification of L-isoaspartyl residues in peptides and proteins that result from spontaneous decomposition of normal L-aspartyl and L-asparaginyl residues. It plays a role in the repair and/or degradation of damaged proteins. In Methanoregula boonei (strain DSM 21154 / JCM 14090 / 6A8), this protein is Protein-L-isoaspartate O-methyltransferase.